The sequence spans 357 residues: Arginine kinase Pro c 2.0101 (357 aa).

Residues 9 to 91 (KLEEGFKKLE…FDPIIEDYHK (83 aa)) enclose the Phosphagen kinase N-terminal domain. Position 64-68 (64-68 (GVGIY)) interacts with L-arginine. Residues 119–356 (FVISTRVRCG…LELIKIEKEM (238 aa)) form the Phosphagen kinase C-terminal domain. ATP-binding positions include 122 to 126 (STRVR) and His-185. Residue Glu-225 coordinates L-arginine. Residue Arg-229 coordinates ATP. Cys-271 is an L-arginine binding site. ATP is bound by residues 280–284 (RASVH) and 309–314 (RGTRGE). Glu-314 provides a ligand contact to L-arginine.

Belongs to the ATP:guanido phosphotransferase family. Glycosylated. In terms of tissue distribution, muscle (at protein level).

It carries out the reaction L-arginine + ATP = N(omega)-phospho-L-arginine + ADP + H(+). Its function is as follows. Catalyzes the reversible transfer of high energy ATP gamma-phosphate group to L-arginine. This is Arginine kinase Pro c 2.0101 from Procambarus clarkii (Red swamp crayfish).